A 2594-amino-acid polypeptide reads, in one-letter code: Immunoglobulin superfamily member 10 (2594 aa).

A signal peptide spans 1 to 25 (MQKRGREVSCLLISLTAICLVVTPG). Positions 29–56 (CPRRCACYVPTEVHCTFRYLTSIPDGIP) constitute an LRRNT domain. 6 LRR repeats span residues 58-79 (NVERVNLGYNSLTRLTENDFSG), 82-103 (RLELLMLHSNGIHRVSDKTFSG), 106-127 (SLQVLKMSYNKVQIIEKDTLYG), 130-151 (SLTRLHLDHNNIEFINPEAFYG), 154-175 (LLRLVHLEGNRLTKLHPDTFVS), and 186-207 (FIKYLYLSDNFLTSLPKEMVSS). The LRRCT domain occupies 219 to 281 (NPWTCDCHLK…VPSGSFLCTK (63 aa)). Asn439 is a glycosylation site (N-linked (GlcNAc...) asparagine). 2 Ig-like C2-type domains span residues 461–567 (PKAE…YRIT) and 571–661 (PYVE…FQVS). 2 disulfide bridges follow: Cys497-Cys551 and Cys595-Cys645. N-linked (GlcNAc...) asparagine glycosylation is present at Asn627. Basic and acidic residues predominate over residues 670-685 (IEHDRDIDGSGLEEPK). 2 disordered regions span residues 670 to 725 (IEHD…RDLT) and 963 to 1008 (VSSN…GRER). A compositionally biased stretch (basic residues) spans 715 to 725 (IHKKNKHRDLT). Over residues 972 to 984 (TTKDPGFSKRPSD) the composition is skewed to basic and acidic residues. Polar residues predominate over residues 985–1003 (SHTTAPSLFQTPRNNSTGN). Asn1044 is a glycosylation site (N-linked (GlcNAc...) asparagine). Disordered regions lie at residues 1228 to 1251 (TATKPPEKAPLLPTDHGSSSPSTT), 1333 to 1364 (VRSKKAKDQTKGSLKNRKGPTITPRQISGYST), and 1428 to 1457 (SQESTAMKRASATPPLLSSGAPRMPTPSPP). Residues 1333 to 1342 (VRSKKAKDQT) show a composition bias toward basic and acidic residues. Positions 1355–1364 (TPRQISGYST) are enriched in polar residues. 10 consecutive Ig-like C2-type domains span residues 1619-1710 (PRII…VTLS), 1715-1807 (PARI…VKIQ), 1812-1901 (PPVI…RRVV), 1912-2005 (PRIE…VRLR), 2008-2106 (PAKI…VHLT), 2112-2200 (PRIR…YKLD), 2205-2302 (PPLI…LKVL), 2308-2398 (PTFR…ILLE), 2403-2493 (PVIL…VPVT), and 2499-2592 (PRII…TYIQ). Disulfide bonds link Cys1641–Cys1694, Cys1738–Cys1791, and Cys1835–Cys1888. An LRR 11 repeat occupies 1658–1681 (SGREISRGIQKTRFHVLPNGTLSI). Residues Asn1676, Asn1780, Asn1870, and Asn1933 are each glycosylated (N-linked (GlcNAc...) asparagine). Intrachain disulfides connect Cys1934–Cys1987, Cys2031–Cys2090, Cys2134–Cys2184, Cys2232–Cys2284, Cys2330–Cys2382, Cys2425–Cys2477, and Cys2521–Cys2576. Asn2072 carries an N-linked (GlcNAc...) asparagine glycan. Asn2364 is a glycosylation site (N-linked (GlcNAc...) asparagine). The residue at position 2574 (Tyr2574) is a Phosphotyrosine.

In terms of tissue distribution, in the embryo, expressed in the nasal mesenchyme.

The protein resides in the secreted. Functionally, involved in the control of early migration of neurons expressing gonadotropin-releasing hormone (GNRH neurons). May be involved in the maintenance of osteochondroprogenitor cells pool. The sequence is that of Immunoglobulin superfamily member 10 (Igsf10) from Mus musculus (Mouse).